We begin with the raw amino-acid sequence, 275 residues long: MWNNHGGFDGGYGGSGMGGGGYMQSPGGFGSPAPTQGEKKSRSRSQQIVPCTVSQLLSATQNDEMFRIGEAELSQVTIVGIVRHAEKAPTNILYKVDDMTAAPMDVRQWVDTDEASCENMVVPPGSYVKVAGHLRSFQNKKSVVAFKIAPVDDMNEFVSHMLEVVHAHMTMNSQGAPSGGGSAVALNTPGRLGDSGGAFSGGNDNATNGLTPHQSQILNLIKSFKGNEGMAFEELKNRLHGMNVNTIRQAVDFLSNEGHIYSTVDDEHYKSTDGD.

The disordered stretch occupies residues 23–47 (MQSPGGFGSPAPTQGEKKSRSRSQQ). A DNA-binding region (OB) is located at residues 76–150 (VTIVGIVRHA…KSVVAFKIAP (75 aa)).

This sequence belongs to the replication factor A protein 2 family. As to quaternary structure, component of the replication protein A complex (RPA/RP-A), a heterotrimeric complex composed of RPA1, RPA2 and RPA3. In terms of processing, differentially phosphorylated throughout the cell cycle, becoming phosphorylated at the G1-S transition and dephosphorylated in late mitosis. Phosphorylation increases upon replication fork stalling.

The protein localises to the nucleus. Its subcellular location is the PML body. In terms of biological role, as part of the heterotrimeric replication protein A complex (RPA/RP-A), binds and stabilizes single-stranded DNA intermediates, that form during DNA replication or upon DNA stress. It prevents their reannealing and in parallel, recruits and activates different proteins and complexes involved in DNA metabolism. Thereby, it plays an essential role both in DNA replication and the cellular response to DNA damage. This Xenopus tropicalis (Western clawed frog) protein is Replication protein A 32 kDa subunit (rpa2).